The following is a 550-amino-acid chain: CTP synthase (550 aa).

Residues 1 to 266 (MNVNYIFVTG…DEYICKYFNL (266 aa)) form an amidoligase domain region. Ser-14 is a binding site for CTP. Ser-14 provides a ligand contact to UTP. ATP is bound by residues 15–20 (SLGKGI) and Asp-72. The Mg(2+) site is built by Asp-72 and Glu-140. Residues 147–149 (DIE), 187–192 (KTKPTQ), and Lys-223 contribute to the CTP site. UTP-binding positions include 187-192 (KTKPTQ) and Lys-223. One can recognise a Glutamine amidotransferase type-1 domain in the interval 291–546 (TIGIVGKYIR…INAAIQYQCK (256 aa)). L-glutamine is bound at residue Gly-353. Cys-380 functions as the Nucleophile; for glutamine hydrolysis in the catalytic mechanism. Residues 381–384 (LGMQ), Glu-404, and Arg-474 contribute to the L-glutamine site. Catalysis depends on residues His-519 and Glu-521.

Belongs to the CTP synthase family. As to quaternary structure, homotetramer.

The catalysed reaction is UTP + L-glutamine + ATP + H2O = CTP + L-glutamate + ADP + phosphate + 2 H(+). It catalyses the reaction L-glutamine + H2O = L-glutamate + NH4(+). The enzyme catalyses UTP + NH4(+) + ATP = CTP + ADP + phosphate + 2 H(+). It participates in pyrimidine metabolism; CTP biosynthesis via de novo pathway; CTP from UDP: step 2/2. Allosterically activated by GTP, when glutamine is the substrate; GTP has no effect on the reaction when ammonia is the substrate. The allosteric effector GTP functions by stabilizing the protein conformation that binds the tetrahedral intermediate(s) formed during glutamine hydrolysis. Inhibited by the product CTP, via allosteric rather than competitive inhibition. Its function is as follows. Catalyzes the ATP-dependent amination of UTP to CTP with either L-glutamine or ammonia as the source of nitrogen. Regulates intracellular CTP levels through interactions with the four ribonucleotide triphosphates. This chain is CTP synthase, found in Blochmanniella floridana.